The primary structure comprises 523 residues: Protein NAM8 (523 aa).

The segment at 1-35 (MSYKQTTYYPSRGNLVRNDSSPYTNTISSETNNSS) is disordered. The segment covering 24–35 (TNTISSETNNSS) has biased composition (low complexity). RRM domains are found at residues 54-145 (NQLY…WATS), 163-242 (CSIF…PTSG), and 313-385 (TTVF…WGRS). The tract at residues 239 to 260 (PTSGQQQHVSGNNDYNRSSSSL) is disordered. Residues 240 to 260 (TSGQQQHVSGNNDYNRSSSSL) are compositionally biased toward polar residues.

In terms of assembly, component of the U1 small nuclear ribonucleoprotein complex (U1 snRNP).

Functionally, component of the U1 small nuclear ribonucleoprotein complex (U1 snRNP) involved in the initiation of meiotic recombination. Involved in the formation of DSBs at recombination hot-spots through meiosis-specific splicing of REC107 pre-mRNA. Collaborates with MER1 to promote splicing of essential meiotic mRNAs REC10, AMA1, MER3, HFM1, SPO22 and PCH2. NAM8 interacts with the pre-mRNA downstream of the 5' splice site, in a region of non-conserved sequence and is required for efficient splicing of uncapped RNA precursor. This is Protein NAM8 from Saccharomyces cerevisiae (strain ATCC 204508 / S288c) (Baker's yeast).